The primary structure comprises 639 residues: Chaperone protein DnaK (639 aa).

Residue Thr198 is modified to Phosphothreonine; by autocatalysis. The tract at residues 605 to 624 (SQAQGGAETNAGKQANAAAD) is disordered.

Belongs to the heat shock protein 70 family.

Functionally, acts as a chaperone. The chain is Chaperone protein DnaK from Shewanella putrefaciens (strain CN-32 / ATCC BAA-453).